Consider the following 299-residue polypeptide: Methylsterol monooxygenase 1-2 (299 aa).

3 helical membrane passes run 39 to 59 (CHNI…LVFI), 96 to 116 (FILV…MIEI), and 118 to 138 (SGLP…YFLV). In terms of domain architecture, Fatty acid hydroxylase spans 132–267 (LVVYFLVEDY…FTYCDYIYGT (136 aa)). The Histidine box-1 motif lies at 147–151 (HRFFH). Residues 160 to 164 (HHIHH) carry the Histidine box-2 motif. The chain crosses the membrane as a helical span at residues 189–209 (TFLGPAIAPGHMITFWLWIAL). The Histidine box-3 motif lies at 239 to 245 (YHDYHHY).

Belongs to the sterol desaturase family. In terms of assembly, interacts with ACBP1. It depends on Fe cation as a cofactor. Expressed in embryo sacs, pollen and trichomes. Observed in leaves, roots, siliques and flowers.

Its subcellular location is the endoplasmic reticulum membrane. The enzyme catalyses 4,4-dimethyl-5alpha-cholest-7-en-3beta-ol + 6 Fe(II)-[cytochrome b5] + 3 O2 + 5 H(+) = 4alpha-carboxy-4beta-methyl-5alpha-cholest-7-ene-3beta-ol + 6 Fe(III)-[cytochrome b5] + 4 H2O. It catalyses the reaction 24-methylenecycloartanol + 6 Fe(II)-[cytochrome b5] + 3 O2 + 5 H(+) = 4alpha-carboxy-4beta,14alpha-dimethyl-9beta,19-cyclo-5alpha-ergost-24(24(1))-en-3beta-ol + 6 Fe(III)-[cytochrome b5] + 4 H2O. Non-heme iron oxygenase involved in sterols biosynthesis by catalyzing the removal of the first methyl group at the C-4 position. 4,4-dimethyl-9-beta,19-cyclopropylsterols such as 24-methylenecycloartanol are the preferred substrates. Acts as a rate-limiting enzyme in the sterol pathway via interaction with ACBP1; sterols serve as lipid modulators for gene expression of homeodomain-leucine zipper IV transcription factors. Together with SMO1-1, involved in the maintenance of sterol composition to balance auxin and cytokinin activities during embryogenesis. The polypeptide is Methylsterol monooxygenase 1-2 (Arabidopsis thaliana (Mouse-ear cress)).